The chain runs to 64 residues: Large ribosomal subunit protein eL24 (64 aa).

Residues C6, C9, C32, and C36 each contribute to the Zn(2+) site. The C4-type zinc finger occupies 6–36 (CNFCGKSIEPGTGKKFVKKDGSVMFICSSKC).

The protein belongs to the eukaryotic ribosomal protein eL24 family. Part of the 50S ribosomal subunit. Forms a cluster with proteins L3 and L14. Zn(2+) is required as a cofactor.

Binds to the 23S rRNA. In Methanococcus aeolicus (strain ATCC BAA-1280 / DSM 17508 / OCM 812 / Nankai-3), this protein is Large ribosomal subunit protein eL24.